Here is a 426-residue protein sequence, read N- to C-terminus: Pyrophosphate--fructose 6-phosphate 1-phosphotransferase 1 (426 aa).

G15 is a binding site for diphosphate. D114 lines the Mg(2+) pocket. Substrate contacts are provided by residues 140–142 (TID), 186–188 (MGR), E247, and 308–311 (YELR). Residue D142 is the Proton acceptor of the active site.

Belongs to the phosphofructokinase type A (PFKA) family. PPi-dependent PFK group II subfamily. Clade 'Short' sub-subfamily. Homotetramer. It depends on Mg(2+) as a cofactor.

The protein localises to the cytoplasm. The catalysed reaction is beta-D-fructose 6-phosphate + diphosphate = beta-D-fructose 1,6-bisphosphate + phosphate + H(+). Its pathway is carbohydrate degradation; glycolysis; D-glyceraldehyde 3-phosphate and glycerone phosphate from D-glucose: step 3/4. Its activity is regulated as follows. Non-allosteric. In terms of biological role, catalyzes the phosphorylation of D-fructose 6-phosphate, the first committing step of glycolysis. Uses inorganic phosphate (PPi) as phosphoryl donor instead of ATP like common ATP-dependent phosphofructokinases (ATP-PFKs), which renders the reaction reversible, and can thus function both in glycolysis and gluconeogenesis. Consistently, PPi-PFK can replace the enzymes of both the forward (ATP-PFK) and reverse (fructose-bisphosphatase (FBPase)) reactions. The sequence is that of Pyrophosphate--fructose 6-phosphate 1-phosphotransferase 1 (Pfk1) from Trichomonas vaginalis (strain ATCC PRA-98 / G3).